The primary structure comprises 314 residues: ATP synthase gamma chain (314 aa).

Belongs to the ATPase gamma chain family. In terms of assembly, F-type ATPases have 2 components, CF(1) - the catalytic core - and CF(0) - the membrane proton channel. CF(1) has five subunits: alpha(3), beta(3), gamma(1), delta(1), epsilon(1). CF(0) has three main subunits: a, b and c.

The protein localises to the cellular thylakoid membrane. Produces ATP from ADP in the presence of a proton gradient across the membrane. The gamma chain is believed to be important in regulating ATPase activity and the flow of protons through the CF(0) complex. This Rippkaea orientalis (strain PCC 8801 / RF-1) (Cyanothece sp. (strain PCC 8801)) protein is ATP synthase gamma chain.